The chain runs to 544 residues: Chaperonin GroEL (544 aa).

ATP is bound by residues 29–32 (TLGP), 86–90 (DGTTT), Gly413, 476–478 (NAA), and Asp492.

Belongs to the chaperonin (HSP60) family. Forms a cylinder of 14 subunits composed of two heptameric rings stacked back-to-back. Interacts with the co-chaperonin GroES.

It is found in the cytoplasm. The enzyme catalyses ATP + H2O + a folded polypeptide = ADP + phosphate + an unfolded polypeptide.. Its function is as follows. Together with its co-chaperonin GroES, plays an essential role in assisting protein folding. The GroEL-GroES system forms a nano-cage that allows encapsulation of the non-native substrate proteins and provides a physical environment optimized to promote and accelerate protein folding. This Bacillus licheniformis (strain ATCC 14580 / DSM 13 / JCM 2505 / CCUG 7422 / NBRC 12200 / NCIMB 9375 / NCTC 10341 / NRRL NRS-1264 / Gibson 46) protein is Chaperonin GroEL.